A 1523-amino-acid polypeptide reads, in one-letter code: MADGVTLVDSTGLHSFSSSPSLSTSSSSLTAVALSLATSASAVTASYSISHLPPPPLPPVPTTMAGWIGWVFSFFFQVIPSVLYWVITFSTITLPTWLFTLFSMSLTFTMNFTTLLLIVLAMVSTISWFIRYRFLNMYSRLPPEPQRKEPQVDLFPDVQEGDSKPGLANYLDEFLSAIKVFGYLERPVFHELTRTMQTRKLIAGETLMLEEEKGFCLVVDGLVQIFVKSMRDGKSDTDEELHHLGAESSDEEHHIDGKQGYQLLTEVKNGASMSSLFSILSLFTEDIQLRENESSGSSSSSIALRAARVPNSIPTSPRGVMDSPSLGFQDHSDDTSNMITNGDLPSVPPLHLGESHTPPSGDQHHQQHHESRKHSSRKRRKSVHPDIVARAMVDTTIAIIPASAFRRLTRVYPRATAHIVQVILTRLQRVTFATAHSYLGLSNEVLGIEKQMTKFTTYDLPNNMRGAALDRLKDKFIKERDRLGSEEVTKGIALHNPSAGRRRRSSSFLRKDAALQVKMMTPRRAATVVTPESAPAEHDTYGVSPGDLLSTIQSSRFGPRYEQPPAKLQSPLAEKENTHFRLPAMQARHTFRRQDTMDEDALFRECILDCIMKGIGLTSSTRDALRKSSHSGDASPKLLSYDSRRQKAIFTNNAFGFIDPYEGSGDGETESLMSMSVTSAGGTSPVINLREELRNDIEIVYFPKGSVLVEQGERHPGLYYVIDGFLDVGVPIVEKGEDLVGVSKPAASKESFPTLKRTTTANSIGAGGTAANDSRRRKQSRKSLYLIKPGGIQGYVGAVASYRSYTDVVAKTDVYVGFLPRASLERIAERYPIALLTLAKRLTSILPRLLLHIDFALEWLQVNAGQVIYHQGDESDAIYLVLNGRLRSVLESPGNKLAVIGEYGQGESVGELEVMTESTRPATLHAIRDTELAKFPRSLFNSLAQEHPGITIQVSKLIAQRMRDLVERPVTEKGVERSNAGGVQTATSTVNLRTVGILPVTAGVPVVEFGNRLLHALHQVGVTNGVTSLNQAAILNHLGRHAFSKMGKLKLSQYLADLEEKYGMVLYIADTNVSSPWTQTCITQADCILLVGLAESSPSIGEYERFLLGMKTTARKELVLLHSERYCPPGLTRRWLKNRVWINGGHHHIQMAFRLTAEPSHPETKRFGTVLKQRVQVLQAEIQKYTSRRIRQTPLYSAQSPFKGDFHRLARRLCGRAVGLVLGGGGARGIAHVGVIKALEEAGIPVDIIGGTSIGSFIGALYARDADVVPMYGRAKKFAGRMGSMWRFALDLTYPTVSYTTGHEFNRGIFKTFGDSQIEDFWLEFYCNTTNISKSRPEYHSSGYVWRYVRASMSLAGLIPPICDEGSMLLDGGYIDNLTVDHMKGLGADVIFAVDVGSIDDNTPQVYGDSLSGFWSVFNRWNPFSSCPNPPTLSEIQARLAYVSSIDNLERAKNIPGCLYMRPPIDGYGTLEFGKFDEIYQVGYAFGKQFLEKLKTEGSLPLPEETEEKKKLQRTMAPRRASI.

The Cytoplasmic segment spans residues 1–66; the sequence is MADGVTLVDS…LPPVPTTMAG (66 aa). Residues 67 to 87 form a helical membrane-spanning segment; sequence WIGWVFSFFFQVIPSVLYWVI. Residues 88 to 109 lie on the Lumenal side of the membrane; it reads TFSTITLPTWLFTLFSMSLTFT. A helical transmembrane segment spans residues 110 to 130; it reads MNFTTLLLIVLAMVSTISWFI. Over 131-1523 the chain is Cytoplasmic; the sequence is RYRFLNMYSR…RTMAPRRASI (1393 aa). Disordered stretches follow at residues 309 to 384 and 524 to 545; these read VPNS…KSVH and RAAT…GVSP. Residues 370–382 show a composition bias toward basic residues; sequence ESRKHSSRKRRKS. Residues 681–800 and 841–961 each bind a nucleoside 3',5'-cyclic phosphate; these read GGTS…GAVA and RLTS…IAQR. One can recognise a PNPLA domain in the interval 1220-1384; that stretch reads LVLGGGGARG…IDNLTVDHMK (165 aa). The short motif at 1224-1229 is the GXGXXG element; sequence GGGARG. Positions 1251-1255 match the GXSXG motif; that stretch reads GTSIG. Ser-1253 (nucleophile) is an active-site residue. Asp-1371 functions as the Proton acceptor in the catalytic mechanism. Positions 1371-1373 match the DGA/G motif; it reads DGG. Residues 1502 to 1523 form a disordered region; that stretch reads LPEETEEKKKLQRTMAPRRASI.

It belongs to the NTE family.

It is found in the endoplasmic reticulum membrane. The enzyme catalyses a 1-acyl-sn-glycero-3-phosphocholine + H2O = sn-glycerol 3-phosphocholine + a fatty acid + H(+). Its activity is regulated as follows. Inhibited by organophosphorus esters. Intracellular phospholipase B that catalyzes the double deacylation of phosphatidylcholine (PC) to glycerophosphocholine (GroPCho). Plays an important role in membrane lipid homeostasis. Responsible for the rapid PC turnover in response to inositol, elevated temperatures, or when choline is present in the growth medium. This chain is Lysophospholipase nte1 (nte1), found in Neosartorya fischeri (strain ATCC 1020 / DSM 3700 / CBS 544.65 / FGSC A1164 / JCM 1740 / NRRL 181 / WB 181) (Aspergillus fischerianus).